A 247-amino-acid polypeptide reads, in one-letter code: Carboxy-S-adenosyl-L-methionine synthase (247 aa).

S-adenosyl-L-methionine is bound by residues Y40, G65–S67, D90–N91, D122–I123, N137, and R204.

Belongs to the class I-like SAM-binding methyltransferase superfamily. Cx-SAM synthase family. In terms of assembly, homodimer.

It catalyses the reaction prephenate + S-adenosyl-L-methionine = carboxy-S-adenosyl-L-methionine + 3-phenylpyruvate + H2O. Its function is as follows. Catalyzes the conversion of S-adenosyl-L-methionine (SAM) to carboxy-S-adenosyl-L-methionine (Cx-SAM). This chain is Carboxy-S-adenosyl-L-methionine synthase, found in Pseudomonas fluorescens (strain Pf0-1).